The primary structure comprises 144 residues: MARIIVLIVAFMALIAGVFATEEKLAKLQIGILKKISPEECTQKARKGDTVSVHYTGKLEDGTVFDSSVERGQPIQFPLGTGRVIPGWDQGILGMCVGEKRKLTIPPHLAYGKQGAGRVIPPDSTLIFTTELVSIDNDGDRDEL.

A signal peptide spans 1–20; the sequence is MARIIVLIVAFMALIAGVFA. Residues 48–136 form the PPIase FKBP-type domain; the sequence is GDTVSVHYTG…IFTTELVSID (89 aa). The Prevents secretion from ER signature appears at 141–144; that stretch reads RDEL.

This sequence belongs to the FKBP-type PPIase family. FKBP2 subfamily.

Its subcellular location is the endoplasmic reticulum. It carries out the reaction [protein]-peptidylproline (omega=180) = [protein]-peptidylproline (omega=0). With respect to regulation, inhibited by both FK506 and rapamycin. PPIases accelerate the folding of proteins. It catalyzes the cis-trans isomerization of proline imidic peptide bonds in oligopeptides. This chain is FK506-binding protein 2 (FPR2), found in Yarrowia lipolytica (strain CLIB 122 / E 150) (Yeast).